The following is a 131-amino-acid chain: MAPPKAEKKPASKAPAEKKPAAKKTASATDSKKRTKTRKETYSSYIYKVLKQTHPDTGISQKAMSIMNSFVNDIFERIASEASKLAAYNKKSTISAREIQTAVRLILPGELAKHAVSEGTRAVTKYSSASN.

Residues 1–20 (MAPPKAEKKPASKAPAEKKP) show a composition bias toward basic and acidic residues. The interval 1–39 (MAPPKAEKKPASKAPAEKKPAAKKTASATDSKKRTKTRK) is disordered. Residues Lys-8 and Lys-9 each carry the N6-acetyllysine; alternate modification. Glycyl lysine isopeptide (Lys-Gly) (interchain with G-Cter in SUMO); alternate cross-links involve residues Lys-8 and Lys-9. Ser-12 is modified (phosphoserine). Lys-13 is subject to N6-acetyllysine. Position 18 is an N6-acetyllysine; alternate (Lys-18). Lys-18 is covalently cross-linked (Glycyl lysine isopeptide (Lys-Gly) (interchain with G-Cter in SUMO); alternate). Lys-19 is covalently cross-linked (Glycyl lysine isopeptide (Lys-Gly) (interchain with G-Cter in SUMO)). A Glycyl lysine isopeptide (Lys-Gly) (interchain with G-Cter in ubiquitin) cross-link involves residue Lys-125.

It belongs to the histone H2B family. In terms of assembly, the nucleosome is a histone octamer containing two molecules each of H2A, H2B, H3 and H4 assembled in one H3-H4 heterotetramer and two H2A-H2B heterodimers. The octamer wraps approximately 147 bp of DNA. Monoubiquitinated to form H2BK123ub1. H2BK123ub1 gives a specific tag for epigenetic transcriptional activation and is also prerequisite for H3K4me and H3K79me formation. H2BK123ub1 also modulates the formation of double-strand breaks during meiosis and is a prerequisite for DNA-damage checkpoint activation. Post-translationally, phosphorylated by STE20 to form H2BS10ph during progression through meiotic prophase. May be correlated with chromosome condensation. In terms of processing, acetylated by GCN5 to form H2BK11ac and H2BK16ac. H2BK16ac can also be formed by ESA1. Acetylation of N-terminal lysines and particularly formation of H2BK11acK16ac has a positive effect on transcription. Sumoylation to form H2BK6su or H2BK7su, and probably also H2BK16su or H2BK17su, occurs preferentially near the telomeres and represses gene transcription.

The protein resides in the nucleus. The protein localises to the chromosome. In terms of biological role, core component of nucleosome. Nucleosomes wrap and compact DNA into chromatin, limiting DNA accessibility to the cellular machineries which require DNA as a template. Histones thereby play a central role in transcription regulation, DNA repair, DNA replication and chromosomal stability. DNA accessibility is regulated via a complex set of post-translational modifications of histones, also called histone code, and nucleosome remodeling. In Scheffersomyces stipitis (strain ATCC 58785 / CBS 6054 / NBRC 10063 / NRRL Y-11545) (Yeast), this protein is Histone H2B.1 (HTB1).